The chain runs to 527 residues: Splicing factor MUD2 (527 aa).

The tract at residues 36–169 is disordered; the sequence is DNAVIDTHFK…SKFNGDRDKR (134 aa). Positions 42 to 55 are enriched in basic and acidic residues; that stretch reads THFKRQKSDGELPK. S49 carries the phosphoserine modification. Positions 60–85 are enriched in polar residues; it reads RNVSHSNNRGPSSIITMSTNRTTYEQ. The segment covering 94-109 has biased composition (basic and acidic residues); it reads SYRDASGRSYNRENRY. Residues 110–122 are compositionally biased toward polar residues; it reads SSHNTGPQWNNNP. 2 stretches are compositionally biased toward basic and acidic residues: residues 125–141 and 155–169; these read RQRD…DRRG and RKNE…RDKR. Residues 424 to 511 form the RRM domain; sequence LLLLNCLDPL…QFNDRTVLCT (88 aa).

MSL5, MUD2 and PRP40 interact to form the commitment complex 2 (CC2), a precursor of mature spliceosomes.

Functionally, splicing factor that contacts pre-mRNA directly and is a component of the pre-mRNA-U1 snRNP complex (commitment complex 2) that forms during early spliceosome assembly in yeast extracts. The chain is Splicing factor MUD2 (MUD2) from Saccharomyces cerevisiae (strain ATCC 204508 / S288c) (Baker's yeast).